The primary structure comprises 64 residues: Large ribosomal subunit protein uL29 (64 aa).

It belongs to the universal ribosomal protein uL29 family.

The sequence is that of Large ribosomal subunit protein uL29 from Psychrobacter sp. (strain PRwf-1).